The chain runs to 1128 residues: Scavenger receptor cysteine-rich domain superfamily protein (1128 aa).

An N-terminal signal peptide occupies residues 1–24 (MTSLRRGNICWVAVCAALLTLTRG). Residues 25–1051 (IDVIAKPSRT…VGAQAGPAGG (1027 aa)) are Extracellular-facing. SRCR domains are found at residues 40–140 (VQLV…VVCN), 143–245 (VRLA…VICT), 248–348 (IRLV…VICT), 351–450 (VRLV…AKCQ), 453–553 (VQLV…VVCR), 555–654 (IRLA…VVCR), 657–757 (LRLA…VVCT), 759–866 (LRLT…VLCK), and 868–968 (IRLV…VQCK). Disulfide bonds link Cys65–Cys129, Cys78–Cys139, Cys109–Cys119, Cys168–Cys234, Cys181–Cys244, Cys212–Cys222, Cys273–Cys337, Cys286–Cys347, Cys316–Cys326, Cys376–Cys439, Cys389–Cys449, Cys419–Cys429, Cys478–Cys542, Cys491–Cys552, Cys522–Cys532, Cys583–Cys644, Cys596–Cys653, Cys624–Cys634, Cys682–Cys746, Cys695–Cys756, and Cys726–Cys736. N-linked (GlcNAc...) asparagine glycosylation occurs at Asn87. N-linked (GlcNAc...) asparagine glycans are attached at residues Asn190 and Asn194. Asn229 carries an N-linked (GlcNAc...) asparagine glycan. The N-linked (GlcNAc...) asparagine glycan is linked to Asn422. N-linked (GlcNAc...) asparagine glycans are attached at residues Asn601 and Asn612. N-linked (GlcNAc...) asparagine glycosylation is found at Asn765, Asn808, Asn834, and Asn936. Intrachain disulfides connect Cys803–Cys865, Cys833–Cys843, Cys906–Cys967, Cys937–Cys947, Cys971–Cys1013, and Cys999–Cys1026. One can recognise a Sushi domain in the interval 969-1028 (AGCDWPGPIRHGSFSPNRSSYDPLTTIDVKCDAGYELMGSKTLQCVTGCDWSRPTPECQR). N-linked (GlcNAc...) asparagine glycosylation is present at Asn985. Asn1031 carries N-linked (GlcNAc...) asparagine glycosylation. The helical transmembrane segment at 1052 to 1072 (VMLIIGIILGAVVMMLIACVA) threads the bilayer. Residues 1073–1128 (LYLKGRNKNIGRGNPATTSAIWKPKKEFDELKEPVLSFSAMTAGGAGPEDGMGEDI) lie on the Cytoplasmic side of the membrane.

In terms of tissue distribution, from the mid-gastrula stage, expressed only in mesenchyme cells that are migrating toward the body wall. At the brachiolaria stage, expressed in presumptive coelomocytes of the coelomic pouch. Also expressed in adult coelomocytes (at protein level).

The protein resides in the cytoplasmic vesicle membrane. Involved in aggregate formation and phagocytosis by larval mesenchyme cells and adult coelomocytes. Binds to bacteria and may act as an opsonin in the innate immune system. This Patiria pectinifera (Starfish) protein is Scavenger receptor cysteine-rich domain superfamily protein.